Consider the following 175-residue polypeptide: MEQQRIEVVGKLGSTYGIRGWLRLYSSTEQAESIFDYQPWFLKIKGQWQPIELESWKFHNHELIVKLKGINEREVAQTLANVEIGVNLSVFPLLDEGDFYWHDLIGCQVVNLQGYAMGVVSEMMETGANDVLVVRASTKDAFGKKERLIPFLYEQVVKRVDLSSKTIEVDWDAGF.

The region spanning 96–175 is the PRC barrel domain; sequence EGDFYWHDLI…TIEVDWDAGF (80 aa).

This sequence belongs to the RimM family. In terms of assembly, binds ribosomal protein uS19.

The protein localises to the cytoplasm. Functionally, an accessory protein needed during the final step in the assembly of 30S ribosomal subunit, possibly for assembly of the head region. Essential for efficient processing of 16S rRNA. May be needed both before and after RbfA during the maturation of 16S rRNA. It has affinity for free ribosomal 30S subunits but not for 70S ribosomes. The polypeptide is Ribosome maturation factor RimM (Histophilus somni (strain 129Pt) (Haemophilus somnus)).